A 327-amino-acid polypeptide reads, in one-letter code: Probable cell division protein WhiA (327 aa).

The segment at residues 275–308 (SLEELGRLADPPMTKDAVAGRIRRLLSMADRKAK) is a DNA-binding region (H-T-H motif).

It belongs to the WhiA family.

Functionally, involved in cell division and chromosome segregation. This is Probable cell division protein WhiA from Mycobacterium bovis (strain ATCC BAA-935 / AF2122/97).